The chain runs to 357 residues: MKVDPNKEKALAAVLSQIEKQFGKGSIMKLGEDRSMDVETISTGSLSLDVALGAGGLPMGRIVEIYGPESSGKTTLTLEVIAAAQREGKTCAFIDAEHALDPIYAKKLGVDIDNLLCSQPDTGEQALEICDALTRSGAVDVIIVDSVAALTPKAEIEGEIGDSHMGLAARMMSQAMRKLAGNLKQSNTLLIFINQIRMKIGVMFGNPETTTGGNALKFYASVRLDIRRTGAIKEGDEVVGNETRVKVVKNKVAAPFKQAEFQILYGQGINRTGELVDLGVAHKLIEKAGAWYSYKGDKIGQGRANAGKYLTENPAIAAEIDKTLRELLLSNPSAMSSSSSDDENSEGNVDFETGEVF.

ATP is bound at residue 67–74; it reads GPESSGKT. Residues 332 to 357 form a disordered region; it reads PSAMSSSSSDDENSEGNVDFETGEVF.

This sequence belongs to the RecA family.

The protein localises to the cytoplasm. In terms of biological role, can catalyze the hydrolysis of ATP in the presence of single-stranded DNA, the ATP-dependent uptake of single-stranded DNA by duplex DNA, and the ATP-dependent hybridization of homologous single-stranded DNAs. It interacts with LexA causing its activation and leading to its autocatalytic cleavage. The polypeptide is Protein RecA (Shewanella sp. (strain ANA-3)).